A 219-amino-acid chain; its full sequence is Large ribosomal subunit protein bL25 (219 aa).

The tract at residues 176–219 (VTVVPPTDEPSEEEVEAMEGESATEEPEVVGEDKEDDEEENKED) is disordered. Acidic residues predominate over residues 184 to 219 (EPSEEEVEAMEGESATEEPEVVGEDKEDDEEENKED).

The protein belongs to the bacterial ribosomal protein bL25 family. CTC subfamily. Part of the 50S ribosomal subunit; part of the 5S rRNA/L5/L18/L25 subcomplex. Contacts the 5S rRNA. Binds to the 5S rRNA independently of L5 and L18.

In terms of biological role, this is one of the proteins that binds to the 5S RNA in the ribosome where it forms part of the central protuberance. This chain is Large ribosomal subunit protein bL25, found in Staphylococcus epidermidis (strain ATCC 35984 / DSM 28319 / BCRC 17069 / CCUG 31568 / BM 3577 / RP62A).